A 151-amino-acid chain; its full sequence is UPF0208 membrane protein YfbV (151 aa).

Topologically, residues 1–45 (MSTPDNRSVNFFSLFCRGQHYSKTWPLEKRLAPVFVENRVIKMTR) are cytoplasmic. The helical transmembrane segment at 46–65 (YAIRFMPPIAVFTLCWQIAL) threads the bilayer. Residues 66–68 (GGQ) are Periplasmic-facing. The helical transmembrane segment at 69–91 (LGPAVATALFALSLPMQGLWWLG) threads the bilayer. Residues 92 to 151 (KRSVTPLPPAILNWFYEVRGKLQESGQVLAPVEGKPDYQALADTLKRAFKQLDKTFLDDL) lie on the Cytoplasmic side of the membrane.

It belongs to the UPF0208 family.

Its subcellular location is the cell inner membrane. The chain is UPF0208 membrane protein YfbV (yfbV) from Escherichia coli O6:H1 (strain CFT073 / ATCC 700928 / UPEC).